The primary structure comprises 191 residues: MSLIRPALVLFILLTLLTGGVYPLLTTSLGQWWFNSQANGSLIRLNGEVRGSALIGQNFTAAGYFQGRPSATAETTDNPMASGGSNLAASNPALDKAVSERVQALRAANPDADPRVPVELVTTSASGLDNNLTPAAALWQVPRVAQARQLSVEQVTQLVNQATQTPLLSFLGQPVVNILQLNMALDALKDK.

Residues 6–26 form a helical membrane-spanning segment; the sequence is PALVLFILLTLLTGGVYPLLT.

This sequence belongs to the KdpC family. As to quaternary structure, the system is composed of three essential subunits: KdpA, KdpB and KdpC.

The protein localises to the cell inner membrane. Part of the high-affinity ATP-driven potassium transport (or Kdp) system, which catalyzes the hydrolysis of ATP coupled with the electrogenic transport of potassium into the cytoplasm. This subunit acts as a catalytic chaperone that increases the ATP-binding affinity of the ATP-hydrolyzing subunit KdpB by the formation of a transient KdpB/KdpC/ATP ternary complex. This Klebsiella pneumoniae subsp. pneumoniae (strain ATCC 700721 / MGH 78578) protein is Potassium-transporting ATPase KdpC subunit.